A 131-amino-acid chain; its full sequence is Small ribosomal subunit protein uS8 (131 aa).

This sequence belongs to the universal ribosomal protein uS8 family. As to quaternary structure, part of the 30S ribosomal subunit. Contacts proteins S5 and S12.

In terms of biological role, one of the primary rRNA binding proteins, it binds directly to 16S rRNA central domain where it helps coordinate assembly of the platform of the 30S subunit. The sequence is that of Small ribosomal subunit protein uS8 from Janthinobacterium sp. (strain Marseille) (Minibacterium massiliensis).